The primary structure comprises 358 residues: Small ribosomal subunit biogenesis GTPase RsgA (358 aa).

The CP-type G domain occupies 76 to 234 (STEIDRPAVA…LADSPGFNQP (159 aa)). GTP-binding positions include 125–128 (NKID) and 176–184 (GPSGVGKSS). Residues Cys259, Cys264, His266, and Cys272 each coordinate Zn(2+). The tract at residues 319 to 358 (TYEPKLANKKYRRPSRRGKNQDQERYENKTLQDIYNDDSE) is disordered. Basic residues predominate over residues 325 to 336 (ANKKYRRPSRRG). A compositionally biased stretch (basic and acidic residues) spans 337–348 (KNQDQERYENKT).

The protein belongs to the TRAFAC class YlqF/YawG GTPase family. RsgA subfamily. Monomer. Associates with 30S ribosomal subunit, binds 16S rRNA. Zn(2+) is required as a cofactor.

The protein resides in the cytoplasm. In terms of biological role, one of several proteins that assist in the late maturation steps of the functional core of the 30S ribosomal subunit. Helps release RbfA from mature subunits. May play a role in the assembly of ribosomal proteins into the subunit. Circularly permuted GTPase that catalyzes slow GTP hydrolysis, GTPase activity is stimulated by the 30S ribosomal subunit. The polypeptide is Small ribosomal subunit biogenesis GTPase RsgA (Microcystis aeruginosa (strain NIES-843 / IAM M-2473)).